A 398-amino-acid polypeptide reads, in one-letter code: MFLKNIFIALAIALLVDATPTTTKRSAGFVALDFSVVKTPKAFPVTNGQEGKTSKRQAVPVTLHNEQVTYAADITVGSNNQKLNVIVDTGSSDLWVPDVNVDCQVTYSDQTADFCKQKGTYDPSGSSASQDLNTPFKIGYGDGSSSQGTLYKDTVGFGGVSIKNQVLADVDSTSIDQGILGVGYKTNEAGGSYDNVPVTLKKQGVIAKNAYSLYLNSPDAATGQIIFGGVDNAKYSGSLIALPVTSDRELRISLGSVEVSGKTINTDNVDVLVDSGTTITYLQQDLADQIIKAFNGKLTQDSNGNSFYEVDCNLSGDVVFNFSKNAKISVPASEFAASLQGDDGQPYDKCQLLFDVNDANILGDNFLRSAYIVYDLDDNEISLAQVKYTSASSISALT.

Residues 1–18 form the signal peptide; that stretch reads MFLKNIFIALAIALLVDA. Residues 19 to 56 constitute a propeptide, activation peptide; sequence TPTTTKRSAGFVALDFSVVKTPKAFPVTNGQEGKTSKR. Residues 70–384 form the Peptidase A1 domain; it reads YAADITVGSN…DLDDNEISLA (315 aa). Asp-88 is an active-site residue. A pepstatin A-binding site is contributed by 88-90; the sequence is DTG. The cysteines at positions 103 and 115 are disulfide-linked. 141–142 is a pepstatin A binding site; it reads GD. 2 residues coordinate Zn(2+): Asp-247 and Asp-270. Residue Asp-274 is part of the active site. A pepstatin A-binding site is contributed by 274 to 278; the sequence is DSGTT. Cys-312 and Cys-350 are oxidised to a cystine. N-linked (GlcNAc...) asparagine glycosylation is found at Asn-313 and Asn-321.

It belongs to the peptidase A1 family. In terms of assembly, monomer.

Its subcellular location is the secreted. It catalyses the reaction Preferential cleavage at the carboxyl of hydrophobic amino acids, but fails to cleave 15-Leu-|-Tyr-16, 16-Tyr-|-Leu-17 and 24-Phe-|-Phe-25 of insulin B chain. Activates trypsinogen, and degrades keratin.. In terms of biological role, secreted aspartic peptidases (SAPs) are a group of ten acidic hydrolases considered as key virulence factors. These enzymes supply the fungus with nutrient amino acids as well as are able to degrade the selected host's proteins involved in the immune defense. Induces host inflammatory cytokine production in a proteolytic activity-independent way. Plays a role in tissue damage during superficial infection. Moreover, acts toward human hemoglobin though limited proteolysis to generate a variety of antimicrobial hemocidins, enabling to compete with the other microorganisms of the same physiological niche using the microbicidal peptides generated from the host protein. Plays a key role in defense against host by cleaving histatin-5 (Hst 5), a peptide from human saliva that carries out fungicidal activity. The cleavage rate decreases in an order of SAP2 &gt; SAP9 &gt; SAP3 &gt; SAP7 &gt; SAP4 &gt; SAP1 &gt; SAP8. The first cleavage occurs between residues 'Lys-17' and 'His-18' of Hst 5, giving DSHAKRHHGYKRKFHEK and HHSHRGY peptides. Simultaneously, the DSHAKRHHGYKRK peptide is also formed. Further fragmentation by SAP2 results in FHEK and DSHAKRHHGY products. The polypeptide is Secreted aspartic protease 2 (Candida albicans (strain SC5314 / ATCC MYA-2876) (Yeast)).